A 141-amino-acid polypeptide reads, in one-letter code: Alpha-lactalbumin (141 aa).

A signal peptide spans 1 to 19; that stretch reads MMPLVPLLLVSIVFPGIQA. The 122-residue stretch at 20–141 folds into the C-type lysozyme domain; the sequence is TQLTRCELTE…ENLEQWVCKK (122 aa). 4 disulfide bridges follow: C25–C139, C47–C130, C80–C96, and C92–C110. The N-linked (GlcNAc...) asparagine glycan is linked to N64. Ca(2+)-binding residues include D101, D106, and D107.

This sequence belongs to the glycosyl hydrolase 22 family. In terms of assembly, lactose synthase (LS) is a heterodimer of a catalytic component, beta1,4-galactosyltransferase (beta4Gal-T1) and a regulatory component, alpha-lactalbumin (LA). In terms of tissue distribution, mammary gland specific. Secreted in milk.

The protein resides in the secreted. In terms of biological role, regulatory subunit of lactose synthase, changes the substrate specificity of galactosyltransferase in the mammary gland making glucose a good acceptor substrate for this enzyme. This enables LS to synthesize lactose, the major carbohydrate component of milk. In other tissues, galactosyltransferase transfers galactose onto the N-acetylglucosamine of the oligosaccharide chains in glycoproteins. This Oryctolagus cuniculus (Rabbit) protein is Alpha-lactalbumin (LALBA).